The following is a 542-amino-acid chain: CTP synthase (542 aa).

Positions 1-266 are amidoligase domain; sequence MATNYIFVTG…DDFICQRFHL (266 aa). S14 lines the CTP pocket. A UTP-binding site is contributed by S14. ATP is bound by residues 15–20 and D72; that span reads SLGKGI. Positions 72 and 140 each coordinate Mg(2+). Residues 147-149, 187-192, and K223 each bind CTP; these read DIE and KTKPTQ. UTP is bound by residues 187-192 and K223; that span reads KTKPTQ. Residue 239–241 coordinates ATP; it reads KDV. Residues 291–542 form the Glutamine amidotransferase type-1 domain; it reads VIGMVGKYTE…VKAAKDNQKK (252 aa). G352 is a binding site for L-glutamine. Residue C379 is the Nucleophile; for glutamine hydrolysis of the active site. L-glutamine-binding positions include 380–383, E403, and R470; that span reads LGMQ. Catalysis depends on residues H515 and E517.

It belongs to the CTP synthase family. Homotetramer.

The enzyme catalyses UTP + L-glutamine + ATP + H2O = CTP + L-glutamate + ADP + phosphate + 2 H(+). It catalyses the reaction L-glutamine + H2O = L-glutamate + NH4(+). It carries out the reaction UTP + NH4(+) + ATP = CTP + ADP + phosphate + 2 H(+). The protein operates within pyrimidine metabolism; CTP biosynthesis via de novo pathway; CTP from UDP: step 2/2. Its activity is regulated as follows. Allosterically activated by GTP, when glutamine is the substrate; GTP has no effect on the reaction when ammonia is the substrate. The allosteric effector GTP functions by stabilizing the protein conformation that binds the tetrahedral intermediate(s) formed during glutamine hydrolysis. Inhibited by the product CTP, via allosteric rather than competitive inhibition. Catalyzes the ATP-dependent amination of UTP to CTP with either L-glutamine or ammonia as the source of nitrogen. Regulates intracellular CTP levels through interactions with the four ribonucleotide triphosphates. The chain is CTP synthase from Pasteurella multocida (strain Pm70).